A 44-amino-acid chain; its full sequence is Thymosin beta-10 (44 aa).

It belongs to the thymosin beta family.

It is found in the cytoplasm. Its subcellular location is the cytoskeleton. Plays an important role in the organization of the cytoskeleton. Binds to and sequesters actin monomers (G actin) and therefore inhibits actin polymerization. This chain is Thymosin beta-10, found in Torpedo marmorata (Marbled electric ray).